A 490-amino-acid chain; its full sequence is Glucose-6-phosphate 1-dehydrogenase (490 aa).

Residues Arg48, 90–91 (DI), and Lys145 each bind NADP(+). Residues His175, Lys179, Glu213, and Asp232 each contribute to the substrate site. The Proton acceptor role is filled by His237. Substrate contacts are provided by Lys340 and Lys345.

Belongs to the glucose-6-phosphate dehydrogenase family.

It carries out the reaction D-glucose 6-phosphate + NADP(+) = 6-phospho-D-glucono-1,5-lactone + NADPH + H(+). It participates in carbohydrate degradation; pentose phosphate pathway; D-ribulose 5-phosphate from D-glucose 6-phosphate (oxidative stage): step 1/3. Catalyzes the oxidation of glucose 6-phosphate to 6-phosphogluconolactone. This is Glucose-6-phosphate 1-dehydrogenase from Buchnera aphidicola subsp. Baizongia pistaciae (strain Bp).